Here is a 644-residue protein sequence, read N- to C-terminus: Chaperone protein HtpG (644 aa).

The tract at residues 1–352 (MNARVEQLEF…AQDMSLNVSR (352 aa)) is a; substrate-binding. The segment at 353 to 566 (EILQQDRQIK…AFGITPALAR (214 aa)) is b. Residues 567–644 (LYRASGQDIP…ILADRLARTL (78 aa)) are c.

This sequence belongs to the heat shock protein 90 family. Homodimer.

The protein resides in the cytoplasm. Molecular chaperone. Has ATPase activity. The chain is Chaperone protein HtpG from Mycobacterium avium (strain 104).